We begin with the raw amino-acid sequence, 589 residues long: Arylsulfatase L (589 aa).

The signal sequence occupies residues 1–31 (MLHLHHSCLCFRSWLPAMLAVLLSLAPSASS). Ca(2+) is bound by residues aspartate 46 and aspartate 47. The N-linked (GlcNAc...) asparagine glycan is linked to asparagine 58. Cysteine 86 is a Ca(2+) binding site. Cysteine 86 acts as the Nucleophile in catalysis. Cysteine 86 bears the 3-oxoalanine (Cys) mark. A glycan (N-linked (GlcNAc...) asparagine) is linked at asparagine 125. Position 145 (lysine 145) interacts with substrate. Residue histidine 147 is part of the active site. The N-linked (GlcNAc...) asparagine glycan is linked to asparagine 258. Position 301 (histidine 301) interacts with substrate. Asparagine 344 carries an N-linked (GlcNAc...) asparagine glycan. Positions 353 and 354 each coordinate Ca(2+). Lysine 378 is a binding site for substrate.

The protein belongs to the sulfatase family. The cofactor is Ca(2+). In terms of processing, N-glycosylated. The conversion to 3-oxoalanine (also known as C-formylglycine, FGly), of a serine or cysteine residue in prokaryotes and of a cysteine residue in eukaryotes, is critical for catalytic activity. As to expression, expressed in the pancreas, liver and kidney.

It is found in the golgi apparatus. Its subcellular location is the golgi stack. It carries out the reaction an aryl sulfate + H2O = a phenol + sulfate + H(+). Inhibited by millimolar concentrations of warfarin. Exhibits arylsulfatase activity towards the artificial substrate 4-methylumbelliferyl sulfate. May be essential for the correct composition of cartilage and bone matrix during development. Has no activity toward steroid sulfates. This is Arylsulfatase L from Homo sapiens (Human).